Here is a 359-residue protein sequence, read N- to C-terminus: tRNA N6-adenosine threonylcarbamoyltransferase (359 aa).

Positions 121 and 125 each coordinate Fe cation. Substrate is bound by residues 143–147 (LVSGG), D176, G189, and N286. D311 contributes to the Fe cation binding site.

It belongs to the KAE1 / TsaD family. The cofactor is Fe(2+).

Its subcellular location is the cytoplasm. The enzyme catalyses L-threonylcarbamoyladenylate + adenosine(37) in tRNA = N(6)-L-threonylcarbamoyladenosine(37) in tRNA + AMP + H(+). Its function is as follows. Required for the formation of a threonylcarbamoyl group on adenosine at position 37 (t(6)A37) in tRNAs that read codons beginning with adenine. Is involved in the transfer of the threonylcarbamoyl moiety of threonylcarbamoyl-AMP (TC-AMP) to the N6 group of A37, together with TsaE and TsaB. TsaD likely plays a direct catalytic role in this reaction. This is tRNA N6-adenosine threonylcarbamoyltransferase from Jannaschia sp. (strain CCS1).